A 158-amino-acid polypeptide reads, in one-letter code: Regenerating islet-derived protein 4 (158 aa).

The N-terminal stretch at 1 to 22 is a signal peptide; the sequence is MASRSMRLLLLLSCLAKTGVLG. Cys-30 and Cys-41 are oxidised to a cystine. Residues 37–155 form the C-type lectin domain; sequence HKSNCYGYFR…CNKRQHFLCK (119 aa). N-linked (GlcNAc...) asparagine glycosylation is present at Asn-50. 2 cysteine pairs are disulfide-bonded: Cys-58–Cys-154 and Cys-129–Cys-146. A carbohydrate-binding positions include 98–103 and 135–137; these read DPQKRQ and NNN.

Highly expressed in the gastrointestinal tract including the duodenum, jejunum, ileum, ileocecum, appendix, descending colon, pancreas and small intestine. Weakly expressed in normal colon and stomach. Strongly expressed in most colorectal tumors than in normal colon. Preferentially expressed in mucinous tumors and in some cases neuro-endocrine tumors. Expressed in mucus-secreting cells and enterocyte-like cells. In small intestine expressed at the basal perinuclear zone of goblet cells.

The protein resides in the secreted. Functionally, calcium-independent lectin displaying mannose-binding specificity and able to maintain carbohydrate recognition activity in an acidic environment. May be involved in inflammatory and metaplastic responses of the gastrointestinal epithelium. The protein is Regenerating islet-derived protein 4 (REG4) of Homo sapiens (Human).